A 126-amino-acid chain; its full sequence is Bleomycin resistance protein (126 aa).

Residues 1 to 119 (MTDQATPNLP…DGTLLRLIQN (119 aa)) enclose the VOC domain.

This sequence belongs to the bleomycin resistance protein family.

Its function is as follows. Binding protein with a strong affinity to the bleomycin family of antibiotics. Binds to CL990; an antimitotic-antibiotic compound. The sequence is that of Bleomycin resistance protein (ble) from Klebsiella pneumoniae.